The following is a 798-amino-acid chain: Integrin beta-7 (798 aa).

Residues 1-19 (MVALPMVLVLLLVLSRGES) form the signal peptide. Residues 20-723 (ELDAKIPSTG…VRPQEKGADH (704 aa)) are Extracellular-facing. In terms of domain architecture, PSI spans 44 to 92 (SCQPAPSCQKCILSHPSCAWCKQLNFTASGEAEARRCARREELLARGCP). Cystine bridges form between Cys51/Cys476, Cys54/Cys80, Cys64/Cys91, Cys216/Cys223, Cys271/Cys311, Cys412/Cys428, and Cys448/Cys474. A glycan (N-linked (GlcNAc...) asparagine) is linked at Asn68. The disordered stretch occupies residues 98–124 (EPRGQQEVLQDQPLSQGARGEGATQLA). In terms of domain architecture, VWFA spans 150 to 389 (YPVDLYYLMD…QLIMDAYNSL (240 aa)). Mg(2+)-binding residues include Ser161 and Ser163. Residues Ser163, Asp166, Asp167, and Asp198 each contribute to the Ca(2+) site. Residues Asn254, Asp256, Pro258, and Glu259 each contribute to the Ca(2+) site. Position 259 (Glu259) interacts with Mg(2+). An N-linked (GlcNAc...) asparagine glycan is attached at Asn279. 2 residues coordinate Ca(2+): Asp289 and Glu373. N-linked (GlcNAc...) asparagine glycosylation occurs at Asn434. Asn477 carries an N-linked (GlcNAc...) asparagine glycan. Intrachain disulfides connect Cys478-Cys497, Cys488-Cys500, Cys502-Cys511, Cys513-Cys545, Cys527-Cys543, Cys537-Cys548, Cys550-Cys559, Cys561-Cys582, Cys566-Cys580, Cys574-Cys585, Cys587-Cys596, Cys598-Cys621, Cys605-Cys619, Cys613-Cys624, Cys626-Cys635, Cys638-Cys641, Cys645-Cys688, Cys651-Cys670, and Cys654-Cys666. I-EGF domains lie at 478–512 (CSDT…RLCE), 513–560 (CSVA…HLCE), 561–597 (CDDA…RACE), and 598–636 (CSGD…ALCD). Asn531 carries an N-linked (GlcNAc...) asparagine glycan. Asn590 carries N-linked (GlcNAc...) asparagine glycosylation. N-linked (GlcNAc...) asparagine glycosylation is found at Asn665 and Asn674. A helical transmembrane segment spans residues 724-746 (TQAIVLGCVGGIVAVGLGLVLAY). Residues 747 to 798 (RLSVEIYDRREYSRFEKEQQQLNWKQDSNPLYKSAITTTINPRFQEADSPTL) are Cytoplasmic-facing. Tyr778 carries the post-translational modification Phosphotyrosine; by Tyr-kinases.

It belongs to the integrin beta chain family. Heterodimer of an alpha and a beta subunit. ITGB7/beta-7 associates with either ITGA4/alpha-4 or ITGAE/alpha-E. Integrin ITGA4/ITGB7 interacts with MADCAM1. Integrin ITGA4/ITGB7 interacts with VCAM1 and fibronectin. Interacts with FLNA (via filamin repeats 4, 9, 12, 17, 19, 21, and 23). In terms of assembly, (Microbial infection) May interact with HIV-1 gp120. As to expression, expressed in a variety of leukocyte lines.

Its subcellular location is the cell membrane. Its function is as follows. Integrin ITGA4/ITGB7 (alpha-4/beta-7) (Peyer patches-specific homing receptor LPAM-1) is an adhesion molecule that mediates lymphocyte migration and homing to gut-associated lymphoid tissue (GALT). Integrin ITGA4/ITGB7 interacts with the cell surface adhesion molecules MADCAM1 which is normally expressed by the vascular endothelium of the gastrointestinal tract. Also interacts with VCAM1 and fibronectin, an extracellular matrix component. It recognizes one or more domains within the alternatively spliced CS-1 region of fibronectin. Interactions involve the tripeptide L-D-T in MADCAM1, and L-D-V in fibronectin. Integrin ITGAE/ITGB7 (alpha-E/beta-7, HML-1) is a receptor for E-cadherin. (Microbial infection) Binds to HIV-1 gp120, thereby allowing the virus to enter GALT, which is thought to be the major trigger of AIDS disease. Interaction would involve a tripeptide L-D-I in HIV-1 gp120. The polypeptide is Integrin beta-7 (ITGB7) (Homo sapiens (Human)).